We begin with the raw amino-acid sequence, 792 residues long: MAARGSCVSRQRQVLFLFLLGGLCLAGSELGRYSVTEETERGSFVANLAKDLGLGVEALAAKRTRVVCDDNKQHLFLDSHTGDLLTNEKLDREKLCGPTEPCMLYFQILMDNPFQIYRAELRILDINDHSPIFQDKKMILKILENTAVGTTFRLERAQDSDGGRNGIQNYTISPNTFFHITVHNSDEGMIYPELVLDKALDWEGQPEFSLTLTALDGGSPPRSGTATIHILVLDINDNAPQFPQELYEIQAPENSPIGLVVIKVTGEDVDSGVNAEISYSFFDASEDIRATFQINPFSGEITLKALLDYEFIKSYKLNVQAVDGGGLSARCTVLVRVLDVNDNAPELIMSSLVNEVVENSPETVLAVFRINDRDSGENGKMVCHIQENLPFLLKPSVDNFYILMTEGALDRESRAEYNITITVSDLGTPRLTTQHTIRVQVSDINDNAPAFNQTSYTLFVRENNSPAMHIGTISATDSDAGSNAHITYSLLPTQDLQMTLTSLVSINADNGQLFAIKALDYEALQAFEFHVGATDRGSPELSSQALVRVVVLDDNDNAPFVLYPMQNASAPYTELLPRTAEPGYLVTKVVAVDRDSGQNAWLSFQLLKATEPGLFSVWAHNGEVRTTRLLSERDVPKHRLLLLVKDNGDPPRSASVTLQVLLVDGFSQPYLPLPEVAHNPTQGEEDVLTLYLVIALASVSSLFLLSVLLFVGVRLCRRARAASLGGCSVPEGHFPGHLVDVSGTGTLSQNYQYEVCLMGGSSGTSDFKFLKSIYPEVHAYSSQDNSDGNPTF.

Positions M1 to A26 are cleaved as a signal peptide. 6 consecutive Cadherin domains span residues G27–F133, Q134–F242, P243–L347, I348–F451, N452–V561, and A568–V676. Residue N169 is glycosylated (N-linked (GlcNAc...) asparagine). Residues N418 and N452 are each glycosylated (N-linked (GlcNAc...) asparagine). Residues V693–V713 traverse the membrane as a helical segment.

The protein resides in the cell membrane. In terms of biological role, potential calcium-dependent cell-adhesion protein. This is Protocadherin beta-18 (Pcdhb18) from Mus musculus (Mouse).